The following is a 466-amino-acid chain: Methylenetetrahydrofolate--tRNA-(uracil-5-)-methyltransferase TrmFO (466 aa).

14–19 (GGGLAG) provides a ligand contact to FAD.

The protein belongs to the MnmG family. TrmFO subfamily. The cofactor is FAD.

The protein resides in the cytoplasm. The enzyme catalyses uridine(54) in tRNA + (6R)-5,10-methylene-5,6,7,8-tetrahydrofolate + NADH + H(+) = 5-methyluridine(54) in tRNA + (6S)-5,6,7,8-tetrahydrofolate + NAD(+). The catalysed reaction is uridine(54) in tRNA + (6R)-5,10-methylene-5,6,7,8-tetrahydrofolate + NADPH + H(+) = 5-methyluridine(54) in tRNA + (6S)-5,6,7,8-tetrahydrofolate + NADP(+). Its function is as follows. Catalyzes the folate-dependent formation of 5-methyl-uridine at position 54 (M-5-U54) in all tRNAs. The chain is Methylenetetrahydrofolate--tRNA-(uracil-5-)-methyltransferase TrmFO from Brucella abortus (strain 2308).